Here is a 361-residue protein sequence, read N- to C-terminus: Phosphoserine aminotransferase (361 aa).

Arginine 43 is a binding site for L-glutamate. Residues 77–78 (AS), tryptophan 103, threonine 152, aspartate 172, and glutamine 195 each bind pyridoxal 5'-phosphate. Lysine 196 bears the N6-(pyridoxal phosphate)lysine mark. A pyridoxal 5'-phosphate-binding site is contributed by 237-238 (NT).

Belongs to the class-V pyridoxal-phosphate-dependent aminotransferase family. SerC subfamily. Homodimer. Pyridoxal 5'-phosphate serves as cofactor.

Its subcellular location is the cytoplasm. The enzyme catalyses O-phospho-L-serine + 2-oxoglutarate = 3-phosphooxypyruvate + L-glutamate. It carries out the reaction 4-(phosphooxy)-L-threonine + 2-oxoglutarate = (R)-3-hydroxy-2-oxo-4-phosphooxybutanoate + L-glutamate. It functions in the pathway amino-acid biosynthesis; L-serine biosynthesis; L-serine from 3-phospho-D-glycerate: step 2/3. Its pathway is cofactor biosynthesis; pyridoxine 5'-phosphate biosynthesis; pyridoxine 5'-phosphate from D-erythrose 4-phosphate: step 3/5. In terms of biological role, catalyzes the reversible conversion of 3-phosphohydroxypyruvate to phosphoserine and of 3-hydroxy-2-oxo-4-phosphonooxybutanoate to phosphohydroxythreonine. The chain is Phosphoserine aminotransferase from Desulfatibacillum aliphaticivorans.